The sequence spans 443 residues: Protein Z-dependent protease inhibitor (443 aa).

The first 23 residues, 1 to 23 (MKVVPSLLLSVLLAQVWLVPGLA), serve as a signal peptide directing secretion. The tract at residues 24 to 66 (PSPQSPETPAPQNQTSRVVQAPREEEEDEQEASEEKAGDEEKA) is disordered. A glycan (N-linked (GlcNAc...) asparagine) is linked at Asn36. Ser56 bears the Phosphoserine mark. The span at 56–66 (SEEKAGDEEKA) shows a compositional bias: basic and acidic residues. Residues 136-153 (TKPGLLPSLFKGLRETLS) form a heparin-binding region. Residues Asn180 and Asn295 are each glycosylated (N-linked (GlcNAc...) asparagine).

This sequence belongs to the serpin family. In terms of processing, phosphorylated by FAM20C in the extracellular medium.

It localises to the secreted. Inhibits activity of the coagulation protease factor Xa in the presence of PROZ, calcium and phospholipids. Also inhibits factor XIa in the absence of cofactors. The chain is Protein Z-dependent protease inhibitor (SERPINA10) from Pongo abelii (Sumatran orangutan).